The primary structure comprises 473 residues: MKTLYSLRRFYPVETLFNGTLALAGRDQETTGFAWWAGNARLINLSGKLLGAHVAHAGLIVFWAGAMNLFEVAHFVPEKPMYEQGLILLPHLATLGWGVGPGGEVIDTFPYFVSGVLHLISSAVLGFGGIYHALLGPETLEESFPFFGYVWKDRNKMTTILGIHLILLGIGAFLLVFKALYFGGVYDTWAPGGGDVRKITNLTLSPSVIFGYLLKSPFGGEGWIVSVDDLEDIIGGHVWLGSICILGGIWHILTKPFAWARRAFVWSGEAYLSYSLGALAVFGFIACCFVWFNNTAYPSEFYGPTGPEASQAQAFTFLVRDQRLGANVGSAQGPTGLGKYLMRSPTGEVIFGGETMRFWDLRAPWLEPLRGPNGLDLSRLKKDIQPWQERRSAEYMTHAPLGSLNSVGGVATEINAVNYVSPRSWLATSHFVLGFFFFVGHLWHAGRARAAAAGFEKGIDRDLEPVLSMTPLN.

The propeptide occupies 1–14; sequence MKTLYSLRRFYPVE. Residue threonine 15 is modified to N-acetylthreonine. Threonine 15 carries the post-translational modification Phosphothreonine. 5 consecutive transmembrane segments (helical) span residues 69-93, 134-155, 178-200, 255-275, and 291-312; these read LFEVAHFVPEKPMYEQGLILLPHLA, LLGPETLEESFPFFGYVWKDRN, KALYFGGVYDTWAPGGGDVRKIT, KPFAWARRAFVWSGEAYLSYS, and WFNNTAYPSEFYGPTGPEASQA. Glutamate 367 contacts [CaMn4O5] cluster. Residues 447–471 form a helical membrane-spanning segment; it reads RARAAAAGFEKGIDRDLEPVLSMTP.

Belongs to the PsbB/PsbC family. PsbC subfamily. As to quaternary structure, PSII is composed of 1 copy each of membrane proteins PsbA, PsbB, PsbC, PsbD, PsbE, PsbF, PsbH, PsbI, PsbJ, PsbK, PsbL, PsbM, PsbT, PsbX, PsbY, PsbZ, Psb30/Ycf12, at least 3 peripheral proteins of the oxygen-evolving complex and a large number of cofactors. It forms dimeric complexes. Binds multiple chlorophylls and provides some of the ligands for the Ca-4Mn-5O cluster of the oxygen-evolving complex. It may also provide a ligand for a Cl- that is required for oxygen evolution. PSII binds additional chlorophylls, carotenoids and specific lipids. serves as cofactor.

It localises to the plastid. The protein resides in the chloroplast thylakoid membrane. Its function is as follows. One of the components of the core complex of photosystem II (PSII). It binds chlorophyll and helps catalyze the primary light-induced photochemical processes of PSII. PSII is a light-driven water:plastoquinone oxidoreductase, using light energy to abstract electrons from H(2)O, generating O(2) and a proton gradient subsequently used for ATP formation. This is Photosystem II CP43 reaction center protein from Acorus calamus var. americanus (American sweet flag).